The chain runs to 284 residues: Homeobox protein Hox-D13 (284 aa).

Positions 217–276 (GRKKRVPYTKTQLKELEREYATNKFITKEKRRRISTATNLTERQVTIWFQNRRVKEKKVV) form a DNA-binding region, homeobox.

The protein belongs to the Abd-B homeobox family.

It is found in the nucleus. In terms of biological role, sequence-specific transcription factor that binds gene promoters and activates their transcription. Part of a developmental regulatory system that provides cells with specific positional identities on the anterior-posterior axis. In Heterodontus francisci (Horn shark), this protein is Homeobox protein Hox-D13 (HOXD13).